The following is a 655-amino-acid chain: Endoplasmic reticulum chaperone BiP (655 aa).

Residues methionine 1–alanine 19 form the signal peptide. The tract at residues methionine 1 to alanine 81 is required for interaction with ELAPOR1. Glycine 37 to tyrosine 40 is a binding site for ATP. Serine 87 is subject to Phosphoserine. Residue lysine 97 participates in ATP binding. Lysine 126 carries the N6-acetyllysine modification. A nucleotide-binding (NBD) region spans residues lysine 126–lysine 281. Position 161 is a 3'-nitrotyrosine (tyrosine 161). Lysine 214 carries the post-translational modification N6-acetyllysine. Glycine 228–threonine 230 is an ATP binding site. Lysine 272 carries the post-translational modification N6-acetyllysine. Glutamate 294–serine 301 serves as a coordination point for ATP. N6-acetyllysine is present on lysine 327. A Glycyl lysine isopeptide (Lys-Gly) (interchain with G-Cter in SUMO2) cross-link involves residue lysine 353. Lysine 354 carries the N6-acetyllysine; alternate modification. Residue lysine 354 forms a Glycyl lysine isopeptide (Lys-Gly) (interchain with G-Cter in SUMO1); alternate linkage. Residue glycine 365 to arginine 368 participates in ATP binding. Residues glutamine 410–valine 420 are interdomain linker. Residues cysteine 421–threonine 501 form a substrate-binding (SBD) region. Lysine 448 carries the N6-succinyllysine modification. Omega-N-methylarginine is present on arginine 493. Position 519 is an O-AMP-threonine; alternate (threonine 519). At threonine 519 the chain carries Phosphothreonine; alternate. Lysine 586 is modified (N6,N6,N6-trimethyllysine; by METTL21A; in vitro). Lysine 586 bears the N6,N6-dimethyllysine; alternate mark. Lysine 586 is modified (N6-methyllysine; alternate). At lysine 592 the chain carries N6-methyllysine. Residues isoleucine 632 to leucine 655 form a disordered region. Phosphothreonine occurs at positions 644 and 649. Acidic residues predominate over residues glycine 645–leucine 655. Phosphoserine is present on serine 650. The short motif at lysine 652 to leucine 655 is the Prevents secretion from ER element.

The protein belongs to the heat shock protein 70 family. Monomer and homooligomer; homooligomerization via the interdomain linker inactivates the chaperone activity and acts as a storage of HSPA5/BiP molecules. Interacts with DNAJC1 (via J domain). Component of an EIF2 complex at least composed of CELF1/CUGBP1, CALR, CALR3, EIF2S1, EIF2S2, HSP90B1 and HSPA5. Part of a large chaperone multiprotein complex comprising DNAJB11, HSP90B1, HSPA5, HYOU, PDIA2, PDIA4, PDIA6, PPIB, SDF2L1, UGGT1 and very small amounts of ERP29, but not, or at very low levels, CALR nor CANX. Interacts with TMEM132A and TRIM21. May form a complex with ERLEC1, OS9, SEL1L and SYVN1. Interacts with DNAJC10. Interacts with DNAJB9/ERdj4; leading to recruit HSPA5/BiP to ERN1/IRE1. Interacts with ERN1/IRE1 (via luminal domain); the interaction takes place following interaction with DNAJB9/ERdj4 and leads to inactivate ERN1/IRE1, the interaction also competitively inhibits ERN1 interaction with MANF. Interacts directly with MANF (via SAP domain); the interaction inhibits ATP binding to HSPA5/BiP and subsequent nucleotide exchange. Interacts with ERN1 (via luminal domain); the interaction competitively inhibits ERN1 interaction with MANF. Interacts with EIF2AK3/PERK (via luminal domain); interaction leads to inactivate EIF2AK3/PERK. Interacts with MX1. Interacts with METTL23. Interacts with CEMIP; the interaction induces calcium leakage from the endoplasmic reticulum and cell migration. Interacts with PCSK4 form; the interaction takes place in the endoplasmic reticulum. Interacts with CIPC. Interacts with CCDC88B (via C-terminus); the interaction opposes ERN1-mediated JNK activation, protecting against apoptosis. Interacts with INPP5K; necessary for INPP5K localization at the endoplasmic reticulum. Interacts with MANF; the interaction is direct. Interacts with LOXL2; leading to activate the ERN1/IRE1-XBP1 pathway of the unfolded protein response. Interacts with CLU under stressed condition; interaction increases CLU protein stability; facilitates its retrotranslocation and redistribution to the mitochondria; cooperatively suppress stress-induced apoptosis by stabilizing mitochondrial membrane integrity. Interacts with CCDC47. Interacts with CLN3. Interacts with ELAPOR1; may regulate the function of HSPA5 in apoptosis and cell proliferation. Interacts with CASP7. Interacts with ILDR2; the interaction stabilizes ILDR2 expression. Interacts with ADAM7. In terms of processing, in unstressed cells, AMPylation at Thr-519 by FICD inactivates the chaperome activity: AMPylated form is locked in a relatively inert state and only weakly stimulated by J domain-containing proteins. In response to endoplasmic reticulum stress, de-AMPylation by the same protein, FICD, restores the chaperone activity. As to expression, expressed in sperm (at protein level).

Its subcellular location is the endoplasmic reticulum lumen. The protein localises to the melanosome. It localises to the cytoplasm. It is found in the cell surface. The enzyme catalyses ATP + H2O = ADP + phosphate + H(+). Its activity is regulated as follows. The chaperone activity is regulated by ATP-induced allosteric coupling of the nucleotide-binding (NBD) and substrate-binding (SBD) domains. In the ADP-bound and nucleotide-free (apo) states, the two domains have little interaction. In contrast, in the ATP-bound state the two domains are tightly coupled, which results in drastically accelerated kinetics in both binding and release of polypeptide substrates. J domain-containing co-chaperones (DNAJB9/ERdj4 or DNAJC10/ERdj5) stimulate the ATPase activity and are required for efficient substrate recognition by HSPA5/BiP. Homooligomerization inactivates participating HSPA5/BiP protomers and probably act as reservoirs to store HSPA5/BiP molecules when they are not needed by the cell. Its function is as follows. Endoplasmic reticulum chaperone that plays a key role in protein folding and quality control in the endoplasmic reticulum lumen. Involved in the correct folding of proteins and degradation of misfolded proteins via its interaction with DNAJC10/ERdj5, probably to facilitate the release of DNAJC10/ERdj5 from its substrate. Acts as a key repressor of the EIF2AK3/PERK and ERN1/IRE1-mediated unfolded protein response (UPR). In the unstressed endoplasmic reticulum, recruited by DNAJB9/ERdj4 to the luminal region of ERN1/IRE1, leading to disrupt the dimerization of ERN1/IRE1, thereby inactivating ERN1/IRE1. Also binds and inactivates EIF2AK3/PERK in unstressed cells. Accumulation of misfolded protein in the endoplasmic reticulum causes release of HSPA5/BiP from ERN1/IRE1 and EIF2AK3/PERK, allowing their homodimerization and subsequent activation. Plays an auxiliary role in post-translational transport of small presecretory proteins across endoplasmic reticulum (ER). May function as an allosteric modulator for SEC61 channel-forming translocon complex, likely cooperating with SEC62 to enable the productive insertion of these precursors into SEC61 channel. Appears to specifically regulate translocation of precursors having inhibitory residues in their mature region that weaken channel gating. May also play a role in apoptosis and cell proliferation. The polypeptide is Endoplasmic reticulum chaperone BiP (Mus musculus (Mouse)).